Reading from the N-terminus, the 239-residue chain is 4-hydroxy-tetrahydrodipicolinate reductase (239 aa).

NAD(+)-binding positions include 8–13 (GSTGKM), 78–80 (GTT), and 102–105 (SANM). His134 (proton donor/acceptor) is an active-site residue. His135 contacts (S)-2,3,4,5-tetrahydrodipicolinate. The active-site Proton donor is the Lys138. 144–145 (GT) lines the (S)-2,3,4,5-tetrahydrodipicolinate pocket.

It belongs to the DapB family.

It is found in the cytoplasm. It catalyses the reaction (S)-2,3,4,5-tetrahydrodipicolinate + NAD(+) + H2O = (2S,4S)-4-hydroxy-2,3,4,5-tetrahydrodipicolinate + NADH + H(+). The enzyme catalyses (S)-2,3,4,5-tetrahydrodipicolinate + NADP(+) + H2O = (2S,4S)-4-hydroxy-2,3,4,5-tetrahydrodipicolinate + NADPH + H(+). The protein operates within amino-acid biosynthesis; L-lysine biosynthesis via DAP pathway; (S)-tetrahydrodipicolinate from L-aspartate: step 4/4. Functionally, catalyzes the conversion of 4-hydroxy-tetrahydrodipicolinate (HTPA) to tetrahydrodipicolinate. The polypeptide is 4-hydroxy-tetrahydrodipicolinate reductase (Rickettsia peacockii (strain Rustic)).